The chain runs to 437 residues: Glucose-1-phosphate adenylyltransferase (437 aa).

Alpha-D-glucose 1-phosphate is bound by residues Y113, G179, 194–195 (EK), and S212.

The protein belongs to the bacterial/plant glucose-1-phosphate adenylyltransferase family. In terms of assembly, homotetramer.

It catalyses the reaction alpha-D-glucose 1-phosphate + ATP + H(+) = ADP-alpha-D-glucose + diphosphate. It functions in the pathway glycan biosynthesis; glycogen biosynthesis. Functionally, involved in the biosynthesis of ADP-glucose, a building block required for the elongation reactions to produce glycogen. Catalyzes the reaction between ATP and alpha-D-glucose 1-phosphate (G1P) to produce pyrophosphate and ADP-Glc. In Haemophilus influenzae (strain 86-028NP), this protein is Glucose-1-phosphate adenylyltransferase.